Reading from the N-terminus, the 503-residue chain is Carboxyl-terminal PDZ ligand of neuronal nitric oxide synthase protein (503 aa).

The PID domain occupies 26–191 (FQHGISFEAK…ESERNSDGSG (166 aa)). The segment at 170 to 212 (HTQQNADGQEDGESERNSDGSGDPGRQLTGAERVSTATAEETD) is disordered. Ser183, Ser187, Ser190, and Ser262 each carry phosphoserine. Residues 266 to 285 (LLPSSSSSKPPGLGTGTPLS) form a disordered region. Residues 319-360 (AAEAAARLEAQARVHQLLLQNKDMLQHISLLVKQVQELELKL) are a coiled coil. Phosphoserine is present on residues Ser368, Ser371, Ser398, and Ser414. The interaction with NOS1 stretch occupies residues 491–503 (QELGDSLDDEIAV). Residues 501 to 503 (IAV) carry the PDZ-binding motif.

In terms of assembly, interacts with the PDZ domain of NOS1 or the second PDZ domain of DLG4 through its C-terminus. Interacts with RASD1 and SYN1, SYN2 and SYN3 via its PID domain. Forms a ternary complex with NOS1 and RASD1. Forms a ternary complex with NOS1 and SYN1. Mainly expressed in brain. Highly expressed in accessory olfactory bulb, caudate-putamen, cerebellum, cerebral cortex, dentate gyrus of the hippocampus, islands of Calleja, olfactory bulb and supraoptic nucleus. Expressed in kidney glomeruli podocytes (at protein level).

It is found in the cell projection. The protein localises to the filopodium. Its subcellular location is the podosome. Adapter protein involved in neuronal nitric-oxide (NO) synthesis regulation via its association with nNOS/NOS1. The complex formed with NOS1 and synapsins is necessary for specific NO and synapsin functions at a presynaptic level. Mediates an indirect interaction between NOS1 and RASD1 leading to enhance the ability of NOS1 to activate RASD1. Competes with DLG4 for interaction with NOS1, possibly affecting NOS1 activity by regulating the interaction between NOS1 and DLG4. In kidney podocytes, plays a role in podosomes and filopodia formation through CDC42 activation. The polypeptide is Carboxyl-terminal PDZ ligand of neuronal nitric oxide synthase protein (Rattus norvegicus (Rat)).